The sequence spans 419 residues: Histone acetyltransferase type B subunit 2 (419 aa).

WD repeat units follow at residues 131–171 (PHDG…VEAL), 177–217 (YHTE…KNIK), 225–265 (AHTD…IIHN), 267–307 (NTKK…NPLY), and 311–351 (GHED…AEQT). The segment at 353 to 357 (DEIED) is interaction with the histone H4 N-terminus. Residues 368 to 408 (GHKTSINDIAVNPNINWLVASAEEDNIVQIWKCSSNIPRIG) form a WD 6 repeat.

It belongs to the WD repeat RBAP46/RBAP48/MSI1 family. As to quaternary structure, component of the HAT-B complex composed of at least HAT1 and HAT2. The HAT-B complex binds to histone H4 tail.

It is found in the cytoplasm. The protein localises to the nucleus. In terms of biological role, regulatory subunit of the histone acetylase B (HAT-B) complex. The complex acetylates Lys-12 of histone H4 which is required for telomeric silencing. This is Histone acetyltransferase type B subunit 2 (HAT2) from Candida glabrata (strain ATCC 2001 / BCRC 20586 / JCM 3761 / NBRC 0622 / NRRL Y-65 / CBS 138) (Yeast).